The chain runs to 66 residues: Regulator of G-protein signaling 6 (66 aa).

Positions 1–66 (LAVQDLKKQP…EDAQEHIYKL (66 aa)) constitute an RGS domain.

As to quaternary structure, interacts with GNB5. Interacts with RGS7BP, leading to regulate the subcellular location of the heterodimer formed with GNB5. Interacts with GNAI1.

Its subcellular location is the cytoplasm. It localises to the cytosol. The protein localises to the membrane. The protein resides in the nucleus. It is found in the cell membrane. In terms of biological role, regulates G protein-coupled receptor signaling cascades. Inhibits signal transduction by increasing the GTPase activity of G protein alpha subunits, thereby driving them into their inactive GDP-bound form. The RGS6/GNB5 dimer enhances GNAO1 GTPase activity. The chain is Regulator of G-protein signaling 6 (Rgs6) from Rattus norvegicus (Rat).